The sequence spans 834 residues: Striatin-interacting protein 2 (834 aa).

Residues 1–48 (MEDPAAPGTGGPPANGNGNGGGKGKQAAPKGREAFRSQRRESEGSVDC) form a disordered region. Over residues 8-24 (GTGGPPANGNGNGGGKG) the composition is skewed to gly residues. A compositionally biased stretch (basic and acidic residues) spans 30–43 (KGREAFRSQRRESE). Phosphoserine is present on residues S318, S329, and S354. The segment at 321–345 (SYTLDLGESQLAPPPSKLRGRRGSR) is disordered. Positions 360–382 (ERDLFKTEEPATEEEEESAGDGE) are disordered. A compositionally biased stretch (acidic residues) spans 369 to 379 (PATEEEEESAG).

Belongs to the STRIP family. Part of the core of STRIPAK complexes composed of PP2A catalytic and scaffolding subunits, the striatins (PP2A regulatory subunits), the striatin-associated proteins MOB4, STRIP1 and STRIP2, PDCD10 and members of the STE20 kinases, such as STK24 and STK26. Interacts with CTTNBP2NL.

It localises to the cytoplasm. Plays a role in the regulation of cell morphology and cytoskeletal organization. Required in the control of cell shape. Calmodulin-binding scaffolding protein which is the center of the striatin-interacting phosphatase and kinase (STRIPAK) complexes. STRIPAK complexes have critical roles in protein (de)phosphorylation and are regulators of multiple signaling pathways including Hippo, MAPK, nuclear receptor and cytoskeleton remodeling. Different types of STRIPAK complexes are involved in a variety of biological processes such as cell growth, differentiation, apoptosis, metabolism and immune regulation. The polypeptide is Striatin-interacting protein 2 (Homo sapiens (Human)).